A 639-amino-acid chain; its full sequence is Phosphatidylinositol 3,4,5-trisphosphate 3-phosphatase cnrN (639 aa).

The Phosphatase tensin-type domain occupies 20–190 (FKSKEMDLDL…NYFKEIVSGS (171 aa)). The active-site Phosphocysteine intermediate is the cysteine 129. The region spanning 195 to 350 (EFVLTFRSIE…LQMECRFQNN (156 aa)) is the C2 tensin-type domain. Disordered stretches follow at residues 243–265 (INND…NNNN), 395–429 (NNIL…HSTP), 451–498 (SSSG…SCSS), 519–567 (NNNN…RKRK), and 598–628 (FTKK…DPSE). Composition is skewed to low complexity over residues 244–265 (NNDN…NNNN), 395–424 (NNIL…LPSS), 458–486 (NSSR…SRSS), and 519–554 (NNNN…SNSN). Residues 598 to 608 (FTKKINPNNNE) are compositionally biased toward polar residues. The span at 619 to 628 (LKKETNDPSE) shows a compositional bias: basic and acidic residues.

Mg(2+) serves as cofactor.

It catalyses the reaction a 1,2-diacyl-sn-glycero-3-phospho-(1D-myo-inositol-3,4,5-trisphosphate) + H2O = a 1,2-diacyl-sn-glycero-3-phospho-(1D-myo-inositol-4,5-bisphosphate) + phosphate. In terms of biological role, protein phosphatase that negatively regulates PI3K-dependent pathways. Regulates cAMP signal transduction to control territory size. During development, a lawn of Dictyostelium cells breaks up into territories where cells aggregate in dendritic streams to form groups of 20'000 cells. The polypeptide is Phosphatidylinositol 3,4,5-trisphosphate 3-phosphatase cnrN (cnrN) (Dictyostelium discoideum (Social amoeba)).